A 591-amino-acid chain; its full sequence is Chaperone protein DnaK (591 aa).

Threonine 175 carries the post-translational modification Phosphothreonine; by autocatalysis. The span at 568–577 shows a compositional bias: low complexity; that stretch reads AQAAEFANKQ. The interval 568–591 is disordered; that stretch reads AQAAEFANKQNESDPNNNSSEQNN. The segment covering 580–591 has biased composition (polar residues); that stretch reads SDPNNNSSEQNN.

Belongs to the heat shock protein 70 family.

Functionally, acts as a chaperone. This Mycoplasma mycoides subsp. mycoides SC (strain CCUG 32753 / NCTC 10114 / PG1) protein is Chaperone protein DnaK.